The following is a 580-amino-acid chain: Double-stranded RNA-binding protein Staufen homolog 1 (580 aa).

Residue Ser-2 is modified to N-acetylserine. Over residues 34-44 the composition is skewed to polar residues; the sequence is SIPSTTSSLPS. The interval 34–59 is disordered; that stretch reads SIPSTTSSLPSENAGRPIQNSALPSA. In terms of domain architecture, DRBM 1 spans 72 to 162; sequence TPTVELNALC…AAKALRTLQS (91 aa). Arg-108 carries the post-translational modification Asymmetric dimethylarginine. An Asymmetric dimethylarginine; alternate modification is found at Arg-115. Arg-115 carries the post-translational modification Omega-N-methylarginine; alternate. The segment at 158–189 is disordered; that stretch reads RTLQSEPLPERPEGRRPGEQVNGRESEEENLN. A compositionally biased stretch (basic and acidic residues) spans 165-182; that stretch reads LPERPEGRRPGEQVNGRE. Ser-183 is modified (phosphoserine). The 68-residue stretch at 191 to 258 folds into the DRBM 2 domain; that stretch reads SEISQVFEIA…AIAVLEELKK (68 aa). Ser-285 is subject to Phosphoserine. Residues 293–361 enclose the DRBM 3 domain; sequence NPISRLAQIQ…AENMLEILGF (69 aa). Positions 367-404 are disordered; it reads QPTKPALKSEEKTPIKKPGDGRKVTFFEPGSGDENGTS. The span at 373-391 shows a compositional bias: basic and acidic residues; that stretch reads LKSEEKTPIKKPGDGRKVT. At Ser-397 the chain carries Phosphoserine.

Binds tubulin. Binds with low affinity single-stranded RNA or DNA homopolymers. Interacts with CASC3 in an RNA-dependent manner. Identified in a mRNP complex, at least composed of DHX9, DDX3X, ELAVL1, HNRNPU, IGF2BP1, ILF3, PABPC1, PCBP2, PTBP2, STAU1, STAU2, SYNCRIP and YBX1. Interacts with the influenza virus nonstructural protein NS1.

Its subcellular location is the cytoplasm. It localises to the rough endoplasmic reticulum. In terms of biological role, binds double-stranded RNA (regardless of the sequence) and tubulin. May play a role in specific positioning of mRNAs at given sites in the cell by cross-linking cytoskeletal and RNA components, and in stimulating their translation at the site. In Ailuropoda melanoleuca (Giant panda), this protein is Double-stranded RNA-binding protein Staufen homolog 1 (STAU1).